Reading from the N-terminus, the 338-residue chain is Fructose-bisphosphate aldolase (338 aa).

2 residues coordinate substrate: arginine 50 and lysine 138. Catalysis depends on glutamate 179, which acts as the Proton acceptor. Lysine 221 acts as the Schiff-base intermediate with dihydroxyacetone-P in catalysis.

This sequence belongs to the class I fructose-bisphosphate aldolase family.

The catalysed reaction is beta-D-fructose 1,6-bisphosphate = D-glyceraldehyde 3-phosphate + dihydroxyacetone phosphate. The protein operates within carbohydrate degradation; glycolysis; D-glyceraldehyde 3-phosphate and glycerone phosphate from D-glucose: step 4/4. This is Fructose-bisphosphate aldolase from Encephalitozoon cuniculi (strain GB-M1) (Microsporidian parasite).